Here is a 229-residue protein sequence, read N- to C-terminus: Ras-related protein Rab-21 (229 aa).

23 to 30 contributes to the GTP binding site; sequence GEGAVGKT. The Effector region motif lies at 45 to 53; the sequence is HEQTLQASF. Residues 71 to 75 and 129 to 132 contribute to the GTP site; these read DTAGQ and NKID. The segment at 179-229 is disordered; the sequence is EANPPSSSTPPESQRGAPSSHPPSQPRQRSTLIVTDDSEQPSPKQGGGCCS. 2 S-geranylgeranyl cysteine lipidation sites follow: cysteine 227 and cysteine 228.

The protein belongs to the small GTPase superfamily. Rab family.

It localises to the golgi apparatus membrane. The sequence is that of Ras-related protein Rab-21 (RAB21) from Geodia cydonium (Sponge).